Consider the following 510-residue polypeptide: Histidine ammonia-lyase (510 aa).

The segment at residues 143-145 is a cross-link (5-imidazolinone (Ala-Gly)); it reads ASG. Serine 144 carries the post-translational modification 2,3-didehydroalanine (Ser).

It belongs to the PAL/histidase family. Contains an active site 4-methylidene-imidazol-5-one (MIO), which is formed autocatalytically by cyclization and dehydration of residues Ala-Ser-Gly.

Its subcellular location is the cytoplasm. The catalysed reaction is L-histidine = trans-urocanate + NH4(+). It functions in the pathway amino-acid degradation; L-histidine degradation into L-glutamate; N-formimidoyl-L-glutamate from L-histidine: step 1/3. The protein is Histidine ammonia-lyase of Shewanella sediminis (strain HAW-EB3).